The chain runs to 274 residues: Large ribosomal subunit protein uL2 (274 aa).

Residues 223–257 form a disordered region; that stretch reads VAMNPVDHPHGGGEGRTSGGRHPVTPWGIPTKGYK.

This sequence belongs to the universal ribosomal protein uL2 family. In terms of assembly, part of the 50S ribosomal subunit. Forms a bridge to the 30S subunit in the 70S ribosome.

One of the primary rRNA binding proteins. Required for association of the 30S and 50S subunits to form the 70S ribosome, for tRNA binding and peptide bond formation. It has been suggested to have peptidyltransferase activity; this is somewhat controversial. Makes several contacts with the 16S rRNA in the 70S ribosome. The protein is Large ribosomal subunit protein uL2 of Geobacter sulfurreducens (strain ATCC 51573 / DSM 12127 / PCA).